Consider the following 221-residue polypeptide: Probable hydrogenase maturation factor HypB (221 aa).

The G-domain stretch occupies residues 35-196 (AFDFMGAIGS…KRINPDAEVV (162 aa)). Ni(2+) contacts are provided by Cys95 and His96. Cys95, His96, His100, His104, and Cys127 together coordinate Zn(2+). Residue Cys127 coordinates Ni(2+).

The protein belongs to the SIMIBI class G3E GTPase family. HypB/HupM subfamily. In terms of assembly, homodimer.

Involved in the maturation of [NiFe] hydrogenases. Required for nickel insertion into the metal center of the hydrogenase. Exhibits a low intrinsic GTPase activity, which is essential for nickel insertion. The protein is Probable hydrogenase maturation factor HypB of Methanocaldococcus jannaschii (strain ATCC 43067 / DSM 2661 / JAL-1 / JCM 10045 / NBRC 100440) (Methanococcus jannaschii).